Reading from the N-terminus, the 241-residue chain is MSNEILIVDDEDRIRRLLKMYLERESFEIHEASNGQEAYELAMENNYACILLDLMLPEMDGIQVATKLREHKQTPIIMLTAKGEETNRVEGFESGADDYIVKPFSPREVVLRVKALLRRTQSTTVEQSEPHARDVIEFKHLEIDNDAHRVLADNQEVNLTPKEYELLIYLAKTPNKVFDREQLLKEVWHYEFYGDLRTVDTHVKRLREKLNRVSSEAAHMIQTVWGVGYKFEVKSNDEPAK.

In terms of domain architecture, Response regulatory spans 4–117 (EILIVDDEDR…EVVLRVKALL (114 aa)). At Asp-53 the chain carries 4-aspartylphosphate. Residues 133–233 (RDVIEFKHLE…VWGVGYKFEV (101 aa)) constitute a DNA-binding region (ompR/PhoB-type).

Post-translationally, phosphorylated by SrrB.

Its subcellular location is the cytoplasm. Functionally, member of the two-component regulatory system SrrA/SrrB, which is involved in the global regulation of staphylococcal virulence factors in response to environmental oxygen levels as well as biofilm formation. Also plays an essential role in host-derived nitric oxide resistance by regulating hmp/flavohemoglobin, an enzyme that detoxifies nitric oxide by converting it to nitrate. Functions as a transcription regulator by direct binding to promoter regions of target genes. The polypeptide is Transcriptional regulatory protein SrrA (srrA) (Staphylococcus aureus (strain NCTC 8325 / PS 47)).